We begin with the raw amino-acid sequence, 294 residues long: tRNA dimethylallyltransferase (294 aa).

An ATP-binding site is contributed by 10 to 17 (GPTAVGKT). 12–17 (TAVGKT) provides a ligand contact to substrate. The tract at residues 35–38 (DSQQ) is interaction with substrate tRNA.

The protein belongs to the IPP transferase family. As to quaternary structure, monomer. Mg(2+) is required as a cofactor.

The enzyme catalyses adenosine(37) in tRNA + dimethylallyl diphosphate = N(6)-dimethylallyladenosine(37) in tRNA + diphosphate. In terms of biological role, catalyzes the transfer of a dimethylallyl group onto the adenine at position 37 in tRNAs that read codons beginning with uridine, leading to the formation of N6-(dimethylallyl)adenosine (i(6)A). The chain is tRNA dimethylallyltransferase from Streptococcus suis (strain 98HAH33).